A 438-amino-acid chain; its full sequence is Proline--tRNA ligase (438 aa).

This sequence belongs to the class-II aminoacyl-tRNA synthetase family. ProS type 2 subfamily. In terms of assembly, homodimer.

The protein localises to the cytoplasm. It carries out the reaction tRNA(Pro) + L-proline + ATP = L-prolyl-tRNA(Pro) + AMP + diphosphate. Functionally, catalyzes the attachment of proline to tRNA(Pro) in a two-step reaction: proline is first activated by ATP to form Pro-AMP and then transferred to the acceptor end of tRNA(Pro). The sequence is that of Proline--tRNA ligase from Rhodopseudomonas palustris (strain TIE-1).